A 106-amino-acid polypeptide reads, in one-letter code: Toxin-like structure LSTX-D7 (106 aa).

A signal peptide spans 1–20 (MMKVLVVFALLVTLISYSSS). The propeptide occupies 21 to 41 (EGIDDLEADELLSLMANEQTR). 4 disulfides stabilise this stretch: Cys45–Cys60, Cys52–Cys69, Cys59–Cys85, and Cys71–Cys83.

This sequence belongs to the neurotoxin 19 (CSTX) family. 02 (D7) subfamily. Expressed by the venom gland.

It localises to the secreted. The polypeptide is Toxin-like structure LSTX-D7 (Lycosa singoriensis (Wolf spider)).